The chain runs to 247 residues: Probable transcriptional regulatory protein MS0710 (247 aa).

The protein belongs to the TACO1 family.

The protein resides in the cytoplasm. The polypeptide is Probable transcriptional regulatory protein MS0710 (Mannheimia succiniciproducens (strain KCTC 0769BP / MBEL55E)).